The chain runs to 616 residues: tRNA 5-methylaminomethyl-2-thiouridine biosynthesis bifunctional protein MnmC (616 aa).

The segment at 1-232 (MLRTIVPARL…KRHCMSARFA (232 aa)) is tRNA (mnm(5)s(2)U34)-methyltransferase. Positions 249–616 (IGGGVAGAAA…ARFAGNRKTA (368 aa)) are FAD-dependent cmnm(5)s(2)U34 oxidoreductase.

It in the N-terminal section; belongs to the methyltransferase superfamily. tRNA (mnm(5)s(2)U34)-methyltransferase family. In the C-terminal section; belongs to the DAO family. It depends on FAD as a cofactor.

The protein resides in the cytoplasm. The enzyme catalyses 5-aminomethyl-2-thiouridine(34) in tRNA + S-adenosyl-L-methionine = 5-methylaminomethyl-2-thiouridine(34) in tRNA + S-adenosyl-L-homocysteine + H(+). In terms of biological role, catalyzes the last two steps in the biosynthesis of 5-methylaminomethyl-2-thiouridine (mnm(5)s(2)U) at the wobble position (U34) in tRNA. Catalyzes the FAD-dependent demodification of cmnm(5)s(2)U34 to nm(5)s(2)U34, followed by the transfer of a methyl group from S-adenosyl-L-methionine to nm(5)s(2)U34, to form mnm(5)s(2)U34. The sequence is that of tRNA 5-methylaminomethyl-2-thiouridine biosynthesis bifunctional protein MnmC from Thiobacillus denitrificans (strain ATCC 25259 / T1).